A 494-amino-acid polypeptide reads, in one-letter code: Cytochrome P450 2C23 (494 aa).

Ser-131 is subject to Phosphoserine. N6-acetyllysine is present on residues Lys-253 and Lys-379. Cys-439 contributes to the heme binding site.

The protein belongs to the cytochrome P450 family. Requires heme as cofactor. In terms of tissue distribution, expressed in kidney and liver. Expressed in cortical tubules of kidney (at protein level).

Its subcellular location is the endoplasmic reticulum membrane. The protein resides in the microsome membrane. The catalysed reaction is (5Z,8Z,11Z,14Z)-eicosatetraenoate + reduced [NADPH--hemoprotein reductase] + O2 = (8R,9S)-epoxy-(5Z,11Z,14Z)-eicosatrienoate + oxidized [NADPH--hemoprotein reductase] + H2O + H(+). The enzyme catalyses (5Z,8Z,11Z,14Z)-eicosatetraenoate + reduced [NADPH--hemoprotein reductase] + O2 = (11R,12S)-epoxy-(5Z,8Z,14Z)-eicosatrienoate + oxidized [NADPH--hemoprotein reductase] + H2O + H(+). It carries out the reaction (5Z,8Z,11Z,14Z)-eicosatetraenoate + reduced [NADPH--hemoprotein reductase] + O2 = (11S,12R)-epoxy-(5Z,8Z,14Z)-eicosatrienoate + oxidized [NADPH--hemoprotein reductase] + H2O + H(+). It catalyses the reaction (5Z,8Z,11Z,14Z)-eicosatetraenoate + reduced [NADPH--hemoprotein reductase] + O2 = (14R,15S)-epoxy-(5Z,8Z,11Z)-eicosatrienoate + oxidized [NADPH--hemoprotein reductase] + H2O + H(+). The catalysed reaction is (5Z,8Z,11Z,14Z)-eicosatetraenoate + reduced [NADPH--hemoprotein reductase] + O2 = (14S,15R)-epoxy-(5Z,8Z,11Z)-eicosatrienoate + oxidized [NADPH--hemoprotein reductase] + H2O + H(+). The enzyme catalyses (5Z,8Z,11Z,14Z,17Z)-eicosapentaenoate + reduced [NADPH--hemoprotein reductase] + O2 = 8,9-epoxy-(5Z,11Z,14Z,17Z)-eicosatetraenoate + oxidized [NADPH--hemoprotein reductase] + H2O + H(+). It carries out the reaction (5Z,8Z,11Z,14Z,17Z)-eicosapentaenoate + reduced [NADPH--hemoprotein reductase] + O2 = 11,12-epoxy-(5Z,8Z,14Z,17Z)-eicosatetraenoate + oxidized [NADPH--hemoprotein reductase] + H2O + H(+). It catalyses the reaction (5Z,8Z,11Z,14Z,17Z)-eicosapentaenoate + reduced [NADPH--hemoprotein reductase] + O2 = 14,15-epoxy-(5Z,8Z,11Z,17Z)-eicosatetraenoate + oxidized [NADPH--hemoprotein reductase] + H2O + H(+). The catalysed reaction is (5Z,8Z,11Z,14Z,17Z)-eicosapentaenoate + reduced [NADPH--hemoprotein reductase] + O2 = (17R,18S)-epoxy-(5Z,8Z,11Z,14Z)-eicosatetraenoate + oxidized [NADPH--hemoprotein reductase] + H2O + H(+). The enzyme catalyses (5Z,8Z,11Z,14Z,17Z)-eicosapentaenoate + reduced [NADPH--hemoprotein reductase] + O2 = (17S,18R)-epoxy-(5Z,8Z,11Z,14Z)-eicosatetraenoate + oxidized [NADPH--hemoprotein reductase] + H2O + H(+). It carries out the reaction 20-hydroxy-(5Z,8Z,11Z,14Z)-eicosatetraenoate + reduced [NADPH--hemoprotein reductase] + O2 = 20-hydroxy-8,9-epoxy-(5Z,11Z,14Z)-eicosatrienoate + oxidized [NADPH--hemoprotein reductase] + H2O + H(+). It participates in lipid metabolism; arachidonate metabolism. Functionally, a cytochrome P450 monooxygenase involved in polyunsaturated fatty acids (PUFAs) metabolism and signaling. Catalyzes preferentially the epoxidation of double bonds of PUFAs. Converts arachidonic acid (ARA, C20:4(n-6)) primarily to stereospecific products 8R,9S-, 11R,12S-, and 14S,15R-EET. Plays a major role in the formation of EETs and hydroxy-EETs (HEETs) in kidney. Via EETs may inhibit the epithelial sodium channels (ENaCs) in nephron segments, preventing excessive sodium absorption during high dietary salt intake. Participates in the formation of anti-inflammatory hydroxyepoxyeicosatrienoic acids (HEETs) by converting 20-hydroxyeicosatetraenoic acid (20-HETE) to 20,8,9-HEET, an activator of PPARA. Metabolizes eicosapentaenoic acid (EPA, C20:5(n-3)) to epoxyeicosatetraenoic acid (EETeTr) regioisomers, 8,9-, 11,12-, 14,15-, and 17,18-EETeTr, preferentially producing 17R,18S enantiomer. Mechanistically, uses molecular oxygen inserting one oxygen atom into a substrate, and reducing the second into a water molecule, with two electrons provided by NADPH via cytochrome P450 reductase (NADPH--hemoprotein reductase). The protein is Cytochrome P450 2C23 of Rattus norvegicus (Rat).